The sequence spans 1107 residues: Integrator complex subunit 6 homolog (1107 aa).

The 194-residue stretch at 2–195 (LITFVVDTSG…LPMEPAIAPM (194 aa)) folds into the VWFA domain. Disordered stretches follow at residues 454–515 (RIIN…SGNL), 542–572 (DNET…SSNI), 629–801 (TLRD…VSSP), 818–861 (QISS…IVNN), and 946–1034 (VVRP…TTPN). 2 stretches are compositionally biased toward low complexity: residues 460–513 (QQQQ…SGSG) and 546–562 (SENS…STTG). The span at 629 to 639 (TLRDIDDDKKP) shows a compositional bias: basic and acidic residues. Positions 693-801 (PSLPTLNSLS…PIPSTTVSSP (109 aa)) are enriched in low complexity. Residues 846–857 (SPPPPPPPPPLP) are compositionally biased toward pro residues. Residues 956-975 (PLTIDTLTSSSSSSTIPTTT) show a composition bias toward low complexity. The span at 976–996 (NGSLSTHDTPNTSPTLSSINY) shows a compositional bias: polar residues. Positions 997 to 1034 (NNNNNNNNNNNNNNNNNNNNNNNNNNRKNSIITTTTPN) are enriched in low complexity. Residues 1041–1103 (IKFVHKEIRR…SLISKLIGYI (63 aa)) enclose the MIF4G domain.

The protein belongs to the Integrator subunit 6 family. Component of the Integrator complex. The core complex associates with protein phosphatase 2A subunits, to form the Integrator-PP2A (INTAC) complex.

It localises to the nucleus. Its subcellular location is the chromosome. Its function is as follows. Component of the integrator complex, a multiprotein complex that terminates RNA polymerase II (Pol II) transcription in the promoter-proximal region of genes. The integrator complex provides a quality checkpoint during transcription elongation by driving premature transcription termination of transcripts that are unfavorably configured for transcriptional elongation: the complex terminates transcription by (1) catalyzing dephosphorylation of the C-terminal domain (CTD) of Pol II subunit polr2a, (2) degrading the exiting nascent RNA transcript via endonuclease activity and (3) promoting the release of Pol II from bound DNA. The integrator complex is also involved in terminating the synthesis of non-coding Pol II transcripts, such as enhancer RNAs (eRNAs), small nuclear RNAs (snRNAs), telomerase RNAs and long non-coding RNAs (lncRNAs). Within the integrator complex, INTS6 acts as a molecular adapter that promotes assembly of protein phosphatase 2A (PP2A) subunits to the integrator core complex, promoting recruitment of PP2A to transcription pause-release checkpoint. The protein is Integrator complex subunit 6 homolog (ints6) of Dictyostelium discoideum (Social amoeba).